We begin with the raw amino-acid sequence, 626 residues long: tRNA uridine 5-carboxymethylaminomethyl modification enzyme MnmG (626 aa).

Residue 13 to 18 (GGGHAG) participates in FAD binding. Residue 273–287 (GPRYCPSIEDKIHRF) participates in NAD(+) binding.

The protein belongs to the MnmG family. As to quaternary structure, homodimer. Heterotetramer of two MnmE and two MnmG subunits. It depends on FAD as a cofactor.

The protein localises to the cytoplasm. NAD-binding protein involved in the addition of a carboxymethylaminomethyl (cmnm) group at the wobble position (U34) of certain tRNAs, forming tRNA-cmnm(5)s(2)U34. This Acinetobacter baumannii (strain ATCC 17978 / DSM 105126 / CIP 53.77 / LMG 1025 / NCDC KC755 / 5377) protein is tRNA uridine 5-carboxymethylaminomethyl modification enzyme MnmG.